Here is a 512-residue protein sequence, read N- to C-terminus: Cytochrome P450 4d1 (512 aa).

Residues E316 and C456 each coordinate heme.

Belongs to the cytochrome P450 family. It depends on heme as a cofactor.

It is found in the endoplasmic reticulum membrane. The protein resides in the microsome membrane. Its function is as follows. Involved in the metabolism of insect hormones and in the breakdown of synthetic insecticides. The polypeptide is Cytochrome P450 4d1 (Cyp4d1) (Drosophila melanogaster (Fruit fly)).